Reading from the N-terminus, the 116-residue chain is Large ribosomal subunit protein bL19 (116 aa).

It belongs to the bacterial ribosomal protein bL19 family.

Functionally, this protein is located at the 30S-50S ribosomal subunit interface and may play a role in the structure and function of the aminoacyl-tRNA binding site. This chain is Large ribosomal subunit protein bL19, found in Pseudomonas aeruginosa (strain LESB58).